A 229-amino-acid chain; its full sequence is MTTSLTWHDVLADEKQQPYFLNTLKTVAEERQSGITIYPPQKDVFNAFRFTELGDVKVVILGQDPYHGPGQAHGLAFSVRPGVAIPPSLLNMYKELEATIPGFTRPTHGYLESWARQGVLLLNTVLTVRAGQAHSHASLGWETFTDKVIALINEHCEGVVFLLWGSHAQKKGAIIDRQRHCVLKAPHPSPLSAHRGFFGSNHFVQTNQWLADRGEAPIDWMPVLPAESE.

The Proton acceptor role is filled by Asp64.

It belongs to the uracil-DNA glycosylase (UDG) superfamily. UNG family.

The protein localises to the cytoplasm. The enzyme catalyses Hydrolyzes single-stranded DNA or mismatched double-stranded DNA and polynucleotides, releasing free uracil.. Excises uracil residues from the DNA which can arise as a result of misincorporation of dUMP residues by DNA polymerase or due to deamination of cytosine. The protein is Uracil-DNA glycosylase of Klebsiella pneumoniae (strain 342).